The following is a 483-amino-acid chain: Glycogen synthase (483 aa).

Position 18 (K18) interacts with ADP-alpha-D-glucose.

The protein belongs to the glycosyltransferase 1 family. Bacterial/plant glycogen synthase subfamily.

It catalyses the reaction [(1-&gt;4)-alpha-D-glucosyl](n) + ADP-alpha-D-glucose = [(1-&gt;4)-alpha-D-glucosyl](n+1) + ADP + H(+). It participates in glycan biosynthesis; glycogen biosynthesis. Its function is as follows. Synthesizes alpha-1,4-glucan chains using ADP-glucose. This is Glycogen synthase from Methylocella silvestris (strain DSM 15510 / CIP 108128 / LMG 27833 / NCIMB 13906 / BL2).